Reading from the N-terminus, the 485-residue chain is Probable glycine dehydrogenase (decarboxylating) subunit 2 (485 aa).

At lysine 273 the chain carries N6-(pyridoxal phosphate)lysine.

The protein belongs to the GcvP family. C-terminal subunit subfamily. In terms of assembly, the glycine cleavage system is composed of four proteins: P, T, L and H. In this organism, the P 'protein' is a heterodimer of two subunits. It depends on pyridoxal 5'-phosphate as a cofactor.

The enzyme catalyses N(6)-[(R)-lipoyl]-L-lysyl-[glycine-cleavage complex H protein] + glycine + H(+) = N(6)-[(R)-S(8)-aminomethyldihydrolipoyl]-L-lysyl-[glycine-cleavage complex H protein] + CO2. Its function is as follows. The glycine cleavage system catalyzes the degradation of glycine. The P protein binds the alpha-amino group of glycine through its pyridoxal phosphate cofactor; CO(2) is released and the remaining methylamine moiety is then transferred to the lipoamide cofactor of the H protein. The polypeptide is Probable glycine dehydrogenase (decarboxylating) subunit 2 (Caldanaerobacter subterraneus subsp. tengcongensis (strain DSM 15242 / JCM 11007 / NBRC 100824 / MB4) (Thermoanaerobacter tengcongensis)).